The following is a 229-amino-acid chain: Demethylmenaquinone methyltransferase (229 aa).

Residues T57, D77, and 101 to 102 (DV) contribute to the S-adenosyl-L-methionine site.

The protein belongs to the class I-like SAM-binding methyltransferase superfamily. MenG/UbiE family.

The catalysed reaction is a 2-demethylmenaquinol + S-adenosyl-L-methionine = a menaquinol + S-adenosyl-L-homocysteine + H(+). It participates in quinol/quinone metabolism; menaquinone biosynthesis; menaquinol from 1,4-dihydroxy-2-naphthoate: step 2/2. Functionally, methyltransferase required for the conversion of demethylmenaquinol (DMKH2) to menaquinol (MKH2). The polypeptide is Demethylmenaquinone methyltransferase (Chlamydia trachomatis serovar L2 (strain ATCC VR-902B / DSM 19102 / 434/Bu)).